Here is a 128-residue protein sequence, read N- to C-terminus: Flagellar assembly factor FliW 1 (128 aa).

The protein belongs to the FliW family. Interacts with translational regulator CsrA and flagellin(s).

It is found in the cytoplasm. Functionally, acts as an anti-CsrA protein, binds CsrA and prevents it from repressing translation of its target genes, one of which is flagellin. Binds to flagellin and participates in the assembly of the flagellum. This Wolinella succinogenes (strain ATCC 29543 / DSM 1740 / CCUG 13145 / JCM 31913 / LMG 7466 / NCTC 11488 / FDC 602W) (Vibrio succinogenes) protein is Flagellar assembly factor FliW 1.